The chain runs to 133 residues: MGMAQSSSSSSRPSDSEQLEEPSKPVMALDKAKEIVASSPVVVFSKTYCPFCARVKRLLAELAASYKAVELDVESDGSELQSALADWTGQRTVPCVFIKGKHIGGCDDTMAMHKGGNLVPLLTEAGAIATPSL.

Positions 1–13 (MGMAQSSSSSSRP) are enriched in low complexity. Positions 1–25 (MGMAQSSSSSSRPSDSEQLEEPSKP) are disordered. The transit peptide at 1–27 (MGMAQSSSSSSRPSDSEQLEEPSKPVM) directs the protein to the chloroplast. The Glutaredoxin domain maps to 29-129 (LDKAKEIVAS…PLLTEAGAIA (101 aa)). An intrachain disulfide couples C49 to C52.

Belongs to the glutaredoxin family. CPYC subfamily.

The protein localises to the plastid. It is found in the chloroplast. In terms of biological role, has a glutathione-disulfide oxidoreductase activity in the presence of NADPH and glutathione reductase. Reduces low molecular weight disulfides and proteins. This is Glutaredoxin-C4, chloroplastic (GRXC4) from Oryza sativa subsp. japonica (Rice).